The chain runs to 259 residues: NH(3)-dependent NAD(+) synthetase (259 aa).

33-40 lines the ATP pocket; it reads GLSGGIDS. Position 39 (D39) interacts with Mg(2+). R119 is a deamido-NAD(+) binding site. Position 139 (T139) interacts with ATP. E144 is a Mg(2+) binding site. 2 residues coordinate deamido-NAD(+): K152 and D159. Residues K168 and S190 each contribute to the ATP site. 249-250 contacts deamido-NAD(+); sequence HK.

It belongs to the NAD synthetase family. In terms of assembly, homodimer.

It carries out the reaction deamido-NAD(+) + NH4(+) + ATP = AMP + diphosphate + NAD(+) + H(+). It functions in the pathway cofactor biosynthesis; NAD(+) biosynthesis; NAD(+) from deamido-NAD(+) (ammonia route): step 1/1. Its function is as follows. Catalyzes the ATP-dependent amidation of deamido-NAD to form NAD. Uses ammonia as a nitrogen source. This chain is NH(3)-dependent NAD(+) synthetase, found in Methanocaldococcus jannaschii (strain ATCC 43067 / DSM 2661 / JAL-1 / JCM 10045 / NBRC 100440) (Methanococcus jannaschii).